The primary structure comprises 517 residues: GMP synthase [glutamine-hydrolyzing] (517 aa).

A Glutamine amidotransferase type-1 domain is found at 9–199; it reads RILILDFGSQ…VLGVCGCERL (191 aa). The Nucleophile role is filled by Cys-86. Active-site residues include His-173 and Glu-175. The GMPS ATP-PPase domain occupies 200–392; the sequence is WTSESIIEDA…LGLPYEMLYR (193 aa). 227-233 lines the ATP pocket; sequence SGGVDSS.

In terms of assembly, homodimer.

It carries out the reaction XMP + L-glutamine + ATP + H2O = GMP + L-glutamate + AMP + diphosphate + 2 H(+). Its pathway is purine metabolism; GMP biosynthesis; GMP from XMP (L-Gln route): step 1/1. Functionally, catalyzes the synthesis of GMP from XMP. The polypeptide is GMP synthase [glutamine-hydrolyzing] (Vibrio vulnificus (strain YJ016)).